We begin with the raw amino-acid sequence, 146 residues long: Small RNA-binding protein 11, chloroplastic (146 aa).

The N-terminal 31 residues, 1–31, are a transit peptide targeting the chloroplast; sequence MAALARIGGRHLKSVCLINSSASCFFTQRRG. Positions 34 to 112 constitute an RRM domain; that stretch reads SKLFIGGLSF…RTIFVDYAKA (79 aa). Ser42 carries the phosphoserine modification.

In terms of tissue distribution, expressed in rosette leaves, cauline leaves, stems and flowers.

It is found in the plastid. It localises to the chloroplast. In terms of biological role, probable RNA-binding protein that may be involved in salt and oxidative stress tolerance. This is Small RNA-binding protein 11, chloroplastic from Arabidopsis thaliana (Mouse-ear cress).